We begin with the raw amino-acid sequence, 707 residues long: Polyribonucleotide nucleotidyltransferase (707 aa).

The Mg(2+) site is built by D486 and D492. The 60-residue stretch at 553–612 (PRIHIIKINPEKIKDVIGKGGSVIRMLTEETGTIIEIEDDGTVKISSTVKEKAKNAIRRI) folds into the KH domain. The S1 motif domain occupies 622 to 690 (GRIYSGKVTR…RQGRLRLSIK (69 aa)).

It belongs to the polyribonucleotide nucleotidyltransferase family. In terms of assembly, component of the RNA degradosome, which is a multiprotein complex involved in RNA processing and mRNA degradation. The cofactor is Mg(2+).

Its subcellular location is the cytoplasm. The enzyme catalyses RNA(n+1) + phosphate = RNA(n) + a ribonucleoside 5'-diphosphate. In terms of biological role, involved in mRNA degradation. Catalyzes the phosphorolysis of single-stranded polyribonucleotides processively in the 3'- to 5'-direction. This Buchnera aphidicola subsp. Acyrthosiphon pisum (strain 5A) protein is Polyribonucleotide nucleotidyltransferase.